Reading from the N-terminus, the 196-residue chain is Proteasome subunit beta 1 (196 aa).

Positions 1–6 (MEKKTG) are cleaved as a propeptide — removed in mature form; by autocatalysis. Thr7 serves as the catalytic Nucleophile.

Belongs to the peptidase T1B family. The 20S proteasome core is composed of 14 alpha and 14 beta subunits that assemble into four stacked heptameric rings, resulting in a barrel-shaped structure. The two inner rings, each composed of seven catalytic beta subunits, are sandwiched by two outer rings, each composed of seven alpha subunits. The catalytic chamber with the active sites is on the inside of the barrel. Has a gated structure, the ends of the cylinder being occluded by the N-termini of the alpha-subunits. Is capped at one or both ends by the proteasome regulatory ATPase, PAN.

The protein localises to the cytoplasm. The catalysed reaction is Cleavage of peptide bonds with very broad specificity.. With respect to regulation, the formation of the proteasomal ATPase PAN-20S proteasome complex, via the docking of the C-termini of PAN into the intersubunit pockets in the alpha-rings, triggers opening of the gate for substrate entry. Interconversion between the open-gate and close-gate conformations leads to a dynamic regulation of the 20S proteasome proteolysis activity. In terms of biological role, component of the proteasome core, a large protease complex with broad specificity involved in protein degradation. In Pyrococcus furiosus (strain ATCC 43587 / DSM 3638 / JCM 8422 / Vc1), this protein is Proteasome subunit beta 1.